Consider the following 660-residue polypeptide: MKTVVFAYHDMGCLGIEALLAAGYEISAIFTHTDNPGEKAFYGSVAHLAAERDIPVYAPDNVNHPLWVERIAQLSPEVIFSFYYRHLICDEIFQLAPAGAFNLHGSLLPKYRGRAPLNWVLVNGETETGVTLHRMVKRADAGAIVAQLRVAIAPDDIAITLHHKLCHAARQLLEQTLPAIKHGNILEIAQRENEATCFGRRTPDDSFLEWHKPASVLHNMVRAVADPWPGAFSYVGNQKFTVWSSRVHPHASKAQPGSVISVAPLLIACGDGALEIVTGQAGDGITMQGSQLAQMLGLVQGSRLNSQPACTARRRTRVLILGVNGFIGNHLTERLLREDHYEVYGLDIGSDAISRFLNHPHFHFVEGDISIHSEWIEYHVKKCDVVLPLVAIATPIEYTRNPLRVFELDFEENLRIIRYCVKYRKRIIFPSTSEVYGMCSDKYFDEDHSNLIVGPVNKPRWIYSVSKQLLDRVIWAYGEKEGLQFTLFLPFNWMGPRLDNLNAARIGSSRAITQLILNLVEGSPIKLIDGGKQKRCFTDIRDGIEALYHIIENAGNRCDGEIINIGNPENEASIEELGEMLLASFEKHPLRHHFPPFAGFRVVESSCYYGKGYQDVEHRKPSIRNAHRCLDWEPKIDMQETIDETLDFFLRTVDLTDKPS.

A formyltransferase ArnAFT region spans residues 1 to 304 (MKTVVFAYHD…MLGLVQGSRL (304 aa)). 86-88 (HLI) provides a ligand contact to (6R)-10-formyltetrahydrofolate. The Proton donor; for formyltransferase activity role is filled by H104. (6R)-10-formyltetrahydrofolate is bound by residues R114 and 136–140 (VKRAD). A dehydrogenase ArnADH region spans residues 314-660 (RRTRVLILGV…RTVDLTDKPS (347 aa)). NAD(+) is bound by residues D347 and 368-369 (DI). Residues A393, Y398, and 432–433 (TS) each bind UDP-alpha-D-glucuronate. The active-site Proton acceptor; for decarboxylase activity is E434. Residues R460, N492, 526–535 (KLIDGGKQKR), and Y613 each bind UDP-alpha-D-glucuronate. Residue R619 is the Proton donor; for decarboxylase activity of the active site.

It in the N-terminal section; belongs to the Fmt family. UDP-L-Ara4N formyltransferase subfamily. In the C-terminal section; belongs to the NAD(P)-dependent epimerase/dehydratase family. UDP-glucuronic acid decarboxylase subfamily. Homohexamer, formed by a dimer of trimers.

The catalysed reaction is UDP-alpha-D-glucuronate + NAD(+) = UDP-beta-L-threo-pentopyranos-4-ulose + CO2 + NADH. The enzyme catalyses UDP-4-amino-4-deoxy-beta-L-arabinose + (6R)-10-formyltetrahydrofolate = UDP-4-deoxy-4-formamido-beta-L-arabinose + (6S)-5,6,7,8-tetrahydrofolate + H(+). The protein operates within nucleotide-sugar biosynthesis; UDP-4-deoxy-4-formamido-beta-L-arabinose biosynthesis; UDP-4-deoxy-4-formamido-beta-L-arabinose from UDP-alpha-D-glucuronate: step 1/3. It functions in the pathway nucleotide-sugar biosynthesis; UDP-4-deoxy-4-formamido-beta-L-arabinose biosynthesis; UDP-4-deoxy-4-formamido-beta-L-arabinose from UDP-alpha-D-glucuronate: step 3/3. Its pathway is bacterial outer membrane biogenesis; lipopolysaccharide biosynthesis. Functionally, bifunctional enzyme that catalyzes the oxidative decarboxylation of UDP-glucuronic acid (UDP-GlcUA) to UDP-4-keto-arabinose (UDP-Ara4O) and the addition of a formyl group to UDP-4-amino-4-deoxy-L-arabinose (UDP-L-Ara4N) to form UDP-L-4-formamido-arabinose (UDP-L-Ara4FN). The modified arabinose is attached to lipid A and is required for resistance to polymyxin and cationic antimicrobial peptides. In Shigella flexneri, this protein is Bifunctional polymyxin resistance protein ArnA.